The sequence spans 204 residues: Putative copper-binding protein (204 aa).

Residues cysteine 77, cysteine 81, and histidine 166 each coordinate Cu cation.

The protein belongs to the SCO1/2 family.

In Stutzerimonas stutzeri (Pseudomonas stutzeri), this protein is Putative copper-binding protein (scoP).